A 257-amino-acid polypeptide reads, in one-letter code: 3-deoxy-manno-octulosonate cytidylyltransferase (257 aa).

It belongs to the KdsB family.

The protein localises to the cytoplasm. It catalyses the reaction 3-deoxy-alpha-D-manno-oct-2-ulosonate + CTP = CMP-3-deoxy-beta-D-manno-octulosonate + diphosphate. It participates in nucleotide-sugar biosynthesis; CMP-3-deoxy-D-manno-octulosonate biosynthesis; CMP-3-deoxy-D-manno-octulosonate from 3-deoxy-D-manno-octulosonate and CTP: step 1/1. The protein operates within bacterial outer membrane biogenesis; lipopolysaccharide biosynthesis. Functionally, activates KDO (a required 8-carbon sugar) for incorporation into bacterial lipopolysaccharide in Gram-negative bacteria. In Stenotrophomonas maltophilia (strain R551-3), this protein is 3-deoxy-manno-octulosonate cytidylyltransferase.